We begin with the raw amino-acid sequence, 332 residues long: Fructose-1,6-bisphosphatase class 1 (332 aa).

Residues Glu-89, Asp-110, Leu-112, and Asp-113 each coordinate Mg(2+). Substrate contacts are provided by residues 113-116, Asn-206, Tyr-239, 257-259, and Lys-269; these read DGSS and YLY. Position 275 (Glu-275) interacts with Mg(2+).

Belongs to the FBPase class 1 family. Homotetramer. It depends on Mg(2+) as a cofactor.

The protein localises to the cytoplasm. The catalysed reaction is beta-D-fructose 1,6-bisphosphate + H2O = beta-D-fructose 6-phosphate + phosphate. The protein operates within carbohydrate biosynthesis; gluconeogenesis. In Klebsiella pneumoniae (strain 342), this protein is Fructose-1,6-bisphosphatase class 1.